Reading from the N-terminus, the 500-residue chain is Glycerol kinase (500 aa).

ADP is bound at residue threonine 13. The ATP site is built by threonine 13, threonine 14, and serine 15. A sn-glycerol 3-phosphate-binding site is contributed by threonine 13. An ADP-binding site is contributed by arginine 17. Sn-glycerol 3-phosphate contacts are provided by arginine 83, glutamate 84, tyrosine 135, and aspartate 244. Residues arginine 83, glutamate 84, tyrosine 135, aspartate 244, and glutamine 245 each contribute to the glycerol site. ADP is bound by residues threonine 266 and glycine 309. Positions 266, 309, 313, and 410 each coordinate ATP. Residues glycine 410 and asparagine 414 each contribute to the ADP site.

This sequence belongs to the FGGY kinase family.

The catalysed reaction is glycerol + ATP = sn-glycerol 3-phosphate + ADP + H(+). It functions in the pathway polyol metabolism; glycerol degradation via glycerol kinase pathway; sn-glycerol 3-phosphate from glycerol: step 1/1. Inhibited by fructose 1,6-bisphosphate (FBP). In terms of biological role, key enzyme in the regulation of glycerol uptake and metabolism. Catalyzes the phosphorylation of glycerol to yield sn-glycerol 3-phosphate. In Burkholderia ambifaria (strain MC40-6), this protein is Glycerol kinase.